A 510-amino-acid polypeptide reads, in one-letter code: MWYRTFRTLGYTICRPYATCATKAERFVKTIDPSTLPRGYLVSSTYAGIKNAIRPVTSTNEPSAATTNVPHPQEAPKPDVALIVSSVPAAIAGTFTTNVFKAAPVVHATTALKAAGPNARVRAILTNSGCANAVTGQQGLEDTQTLVNRVQALLSPRNQNAIPTYEQDARSSSTDVLMMSTGVIGVRLPVAHIQRCLEHLAAPSILQSHPDAWLEAARAYMTTDTFPKIRTRQFILGNRRCSIVGIDKGAGMIHPRMTRSGGQLHATLLGVFATDAPISSATLQRCLDEAVRVSFNCISVDGDMSTNDTILALANGQAPFVDLDCTDTPNEWTETEHPDMVNKFAEELKSLCIEMSHLIVRDGEGAEKFVQVHVRNAGTYEQAHAIASSISTSALVKCAMHGEDANWGRILCSAGYASLPASTPAWTLDPSKVNVTFLPPPHQPDDLAPLPTLVNGVPQAVNETQAKKLLSYEDIYVDVDLQGGSWGSQGRSEATYWTCDFSKEYITVRW.

A compositionally biased stretch (polar residues) spans 57–70 (TSTNEPSAATTNVP). The segment at 57–76 (TSTNEPSAATTNVPHPQEAP) is disordered. 4 residues coordinate substrate: Thr-222, Lys-248, Thr-267, and Glu-364. The active-site Nucleophile is the Thr-267.

Belongs to the ArgJ family. In terms of assembly, heterodimer of an alpha and a beta chain. The alpha and beta chains are autoproteolytically processed from a single precursor protein within the mitochondrion.

It is found in the mitochondrion matrix. The enzyme catalyses N(2)-acetyl-L-ornithine + L-glutamate = N-acetyl-L-glutamate + L-ornithine. It carries out the reaction L-glutamate + acetyl-CoA = N-acetyl-L-glutamate + CoA + H(+). It functions in the pathway amino-acid biosynthesis; L-arginine biosynthesis; L-ornithine and N-acetyl-L-glutamate from L-glutamate and N(2)-acetyl-L-ornithine (cyclic): step 1/1. It participates in amino-acid biosynthesis; L-arginine biosynthesis; N(2)-acetyl-L-ornithine from L-glutamate: step 1/4. Catalyzes two activities which are involved in the cyclic version of arginine biosynthesis: the synthesis of acetylglutamate from glutamate and acetyl-CoA, and of ornithine by transacetylation between acetylornithine and glutamate. This Malassezia globosa (strain ATCC MYA-4612 / CBS 7966) (Dandruff-associated fungus) protein is Arginine biosynthesis bifunctional protein ArgJ, mitochondrial.